Here is a 510-residue protein sequence, read N- to C-terminus: Light-independent protochlorophyllide reductase subunit B (510 aa).

[4Fe-4S] cluster is bound at residue D36. D296 functions as the Proton donor in the catalytic mechanism. Substrate is bound at residue G431–M432.

This sequence belongs to the ChlB/BchB/BchZ family. In terms of assembly, protochlorophyllide reductase is composed of three subunits; ChlL, ChlN and ChlB. Forms a heterotetramer of two ChlB and two ChlN subunits. It depends on [4Fe-4S] cluster as a cofactor.

The protein localises to the plastid. It localises to the chloroplast. It carries out the reaction chlorophyllide a + oxidized 2[4Fe-4S]-[ferredoxin] + 2 ADP + 2 phosphate = protochlorophyllide a + reduced 2[4Fe-4S]-[ferredoxin] + 2 ATP + 2 H2O. It functions in the pathway porphyrin-containing compound metabolism; chlorophyll biosynthesis (light-independent). Component of the dark-operative protochlorophyllide reductase (DPOR) that uses Mg-ATP and reduced ferredoxin to reduce ring D of protochlorophyllide (Pchlide) to form chlorophyllide a (Chlide). This reaction is light-independent. The NB-protein (ChlN-ChlB) is the catalytic component of the complex. This Stigeoclonium helveticum (Green alga) protein is Light-independent protochlorophyllide reductase subunit B.